Consider the following 149-residue polypeptide: Probable flagellum biosynthesis repressor protein FlbT (149 aa).

The protein belongs to the FlbT family.

In terms of biological role, has a post-transcriptional repressor function in flagellum biogenesis. Associates with the 5'-UTR of fljK mRNA and promotes its degradation. This Rhizobium johnstonii (strain DSM 114642 / LMG 32736 / 3841) (Rhizobium leguminosarum bv. viciae) protein is Probable flagellum biosynthesis repressor protein FlbT.